A 214-amino-acid polypeptide reads, in one-letter code: Pyrrolidone-carboxylate peptidase 2 (214 aa).

Residues glutamate 78, cysteine 141, and histidine 165 contribute to the active site.

Belongs to the peptidase C15 family. Homotetramer.

It is found in the cytoplasm. It catalyses the reaction Release of an N-terminal pyroglutamyl group from a polypeptide, the second amino acid generally not being Pro.. Functionally, removes 5-oxoproline from various penultimate amino acid residues except L-proline. The sequence is that of Pyrrolidone-carboxylate peptidase 2 from Streptococcus pneumoniae serotype 4 (strain ATCC BAA-334 / TIGR4).